The following is a 432-amino-acid chain: Mitochondrial distribution and morphology protein 12 (432 aa).

In terms of domain architecture, SMP-LTD spans 1–432 (MSIEVDWRAA…VFPSFWTFLI (432 aa)). Disordered stretches follow at residues 182–273 (WTDP…PRMR) and 354–377 (QQEA…PKRQ). Over residues 214-234 (TSNPTSRPSTSSTLPSHPSAS) the composition is skewed to low complexity. Composition is skewed to basic and acidic residues over residues 243–253 (TGKEHGSLAED) and 355–364 (QEARGQDDRP).

The protein belongs to the MDM12 family. As to quaternary structure, component of the ER-mitochondria encounter structure (ERMES) or MDM complex, composed of mmm1, mdm10, mdm12 and mdm34. A mmm1 homodimer associates with one molecule of mdm12 on each side in a pairwise head-to-tail manner, and the SMP-LTD domains of mmm1 and mdm12 generate a continuous hydrophobic tunnel for phospholipid trafficking.

It is found in the mitochondrion outer membrane. The protein resides in the endoplasmic reticulum membrane. In terms of biological role, component of the ERMES/MDM complex, which serves as a molecular tether to connect the endoplasmic reticulum (ER) and mitochondria. Components of this complex are involved in the control of mitochondrial shape and protein biogenesis, and function in nonvesicular lipid trafficking between the ER and mitochondria. Mdm12 is required for the interaction of the ER-resident membrane protein mmm1 and the outer mitochondrial membrane-resident beta-barrel protein mdm10. The mdm12-mmm1 subcomplex functions in the major beta-barrel assembly pathway that is responsible for biogenesis of all mitochondrial outer membrane beta-barrel proteins, and acts in a late step after the SAM complex. The mdm10-mdm12-mmm1 subcomplex further acts in the TOM40-specific pathway after the action of the mdm12-mmm1 complex. Essential for establishing and maintaining the structure of mitochondria and maintenance of mtDNA nucleoids. This chain is Mitochondrial distribution and morphology protein 12, found in Aspergillus oryzae (strain ATCC 42149 / RIB 40) (Yellow koji mold).